Consider the following 570-residue polypeptide: Dihydroxy-acid dehydratase (570 aa).

[2Fe-2S] cluster is bound at residue Cys61. Asp94 contributes to the Mg(2+) binding site. [2Fe-2S] cluster is bound at residue Cys135. Mg(2+) contacts are provided by Asp136 and Lys137. Lys137 carries the post-translational modification N6-carboxylysine. Cys207 contributes to the [2Fe-2S] cluster binding site. Glu459 serves as a coordination point for Mg(2+). Ser485 functions as the Proton acceptor in the catalytic mechanism.

It belongs to the IlvD/Edd family. Homodimer. [2Fe-2S] cluster is required as a cofactor. Mg(2+) serves as cofactor.

The catalysed reaction is (2R)-2,3-dihydroxy-3-methylbutanoate = 3-methyl-2-oxobutanoate + H2O. It carries out the reaction (2R,3R)-2,3-dihydroxy-3-methylpentanoate = (S)-3-methyl-2-oxopentanoate + H2O. Its pathway is amino-acid biosynthesis; L-isoleucine biosynthesis; L-isoleucine from 2-oxobutanoate: step 3/4. It participates in amino-acid biosynthesis; L-valine biosynthesis; L-valine from pyruvate: step 3/4. Its function is as follows. Functions in the biosynthesis of branched-chain amino acids. Catalyzes the dehydration of (2R,3R)-2,3-dihydroxy-3-methylpentanoate (2,3-dihydroxy-3-methylvalerate) into 2-oxo-3-methylpentanoate (2-oxo-3-methylvalerate) and of (2R)-2,3-dihydroxy-3-methylbutanoate (2,3-dihydroxyisovalerate) into 2-oxo-3-methylbutanoate (2-oxoisovalerate), the penultimate precursor to L-isoleucine and L-valine, respectively. The polypeptide is Dihydroxy-acid dehydratase (Lactococcus lactis subsp. cremoris (strain SK11)).